We begin with the raw amino-acid sequence, 102 residues long: Flagellar hook-basal body complex protein FliE (102 aa).

It belongs to the FliE family.

It localises to the bacterial flagellum basal body. The chain is Flagellar hook-basal body complex protein FliE from Oceanobacillus iheyensis (strain DSM 14371 / CIP 107618 / JCM 11309 / KCTC 3954 / HTE831).